Here is a 449-residue protein sequence, read N- to C-terminus: Hyaluronidase-1 (449 aa).

An N-terminal signal peptide occupies residues 1-23 (MYHIWIKFLAAWIFLKRFNGVHV). Cystine bridges form between Cys-47-Cys-340 and Cys-211-Cys-227. 3 N-linked (GlcNAc...) asparagine glycosylation sites follow: Asn-67, Asn-103, and Asn-111. Glu-135 acts as the Proton donor in catalysis. Asn-153 carries N-linked (GlcNAc...) asparagine glycosylation. A glycan (N-linked (GlcNAc...) asparagine) is linked at Asn-357. Intrachain disulfides connect Cys-365–Cys-376, Cys-370–Cys-427, and Cys-429–Cys-438. Residue Asn-401 is glycosylated (N-linked (GlcNAc...) asparagine). One can recognise an EGF-like domain in the interval 427-438 (CQCYQGWKGLYC).

It belongs to the glycosyl hydrolase 56 family. In terms of assembly, monomer. As to expression, expressed by the venom gland.

It is found in the secreted. It carries out the reaction Random hydrolysis of (1-&gt;4)-linkages between N-acetyl-beta-D-glucosamine and D-glucuronate residues in hyaluronate.. Snake venom endo-hyaluronidase that degrades hyaluronan to smaller oligosaccharide fragments. In venom, it is not toxic by itself, but increases the diffusion of other venom proteins by degrading the extracellular matrix. In addition, it displays antiedematogenic activity. This chain is Hyaluronidase-1, found in Cerastes cerastes (Horned desert viper).